We begin with the raw amino-acid sequence, 446 residues long: Endoplasmic reticulum membrane adapter protein XK (446 aa).

Residues 1–2 lie on the Cytoplasmic side of the membrane; sequence MK. A helical transmembrane segment spans residues 3-23; sequence FPASVIASVFLFVAETAAALY. Residues 24 to 37 lie on the Extracellular side of the membrane; the sequence is LSSTYRSAGDRMWQ. Residues 38–58 form a helical membrane-spanning segment; that stretch reads VLTLLFSLMPCALVQFTLLFV. The Cytoplasmic portion of the chain corresponds to 59–68; it reads HRDLSRDRPL. Residues 69 to 89 form a helical membrane-spanning segment; it reads ALLMHLLQLGPLYRCCEVFCI. The Extracellular portion of the chain corresponds to 90–140; that stretch reads YCQSDQNEEPYVSITKKRQMPKDGLSEEVEKEVGQAEGKLITHRSAFSRAS. S115 is modified (phosphoserine). Residues 141-161 form a helical membrane-spanning segment; that stretch reads VIQAFLGSAPQLTLQLYITVL. At 162 to 171 the chain is on the cytoplasmic side; it reads EQNITTGRCF. Residues 172–192 traverse the membrane as a helical segment; the sequence is IMTLSLLSIVYGALRCNILAI. At 193–208 the chain is on the extracellular side; sequence KIKYDEYEVKVKPLAY. Residues 209-229 traverse the membrane as a helical segment; the sequence is VCIFLWRSFEIATRVIVLVLF. The Cytoplasmic portion of the chain corresponds to 230–235; the sequence is TSVLKI. Residues 236-256 form a helical membrane-spanning segment; the sequence is WVVAVILVNFFSFFLYPWIVF. Topologically, residues 257 to 277 are extracellular; the sequence is WCSGSPFPENIEKALSRVGTT. The helical transmembrane segment at 278–298 threads the bilayer; that stretch reads IVLCFLTLLYAGINMFCWSAV. Residues 299 to 317 lie on the Cytoplasmic side of the membrane; it reads QLKIDNPELISKSQNWYRL. Residues 318 to 338 traverse the membrane as a helical segment; it reads LIYYMTRFIENSVLLLLWYFF. Residues 339-349 are Extracellular-facing; that stretch reads KTDIYMYVCAP. Residues 350 to 370 form a helical membrane-spanning segment; the sequence is LLILQLLIGYCTGILFMLVFY. Residues 371–446 lie on the Cytoplasmic side of the membrane; it reads QFFHPCKKLF…IWTAVDLCSA (76 aa).

It belongs to the XK family. Heterodimer with Kell; disulfide-linked. Interacts with VPS13A.

Its subcellular location is the endoplasmic reticulum membrane. Its function is as follows. Recruits the lipid transfer protein VPS13A from lipid droplets to the endoplasmic reticulum (ER) membrane. The chain is Endoplasmic reticulum membrane adapter protein XK from Mus musculus (Mouse).